Reading from the N-terminus, the 111-residue chain is DNA-directed RNA polymerase subunit Rpo11 (111 aa).

Belongs to the archaeal Rpo11/eukaryotic RPB11/RPC19 RNA polymerase subunit family. Part of the RNA polymerase complex.

Its subcellular location is the cytoplasm. The catalysed reaction is RNA(n) + a ribonucleoside 5'-triphosphate = RNA(n+1) + diphosphate. In terms of biological role, DNA-dependent RNA polymerase (RNAP) catalyzes the transcription of DNA into RNA using the four ribonucleoside triphosphates as substrates. The polypeptide is DNA-directed RNA polymerase subunit Rpo11 (Thermoplasma volcanium (strain ATCC 51530 / DSM 4299 / JCM 9571 / NBRC 15438 / GSS1)).